The primary structure comprises 425 residues: MYVSNLRLSNYRSWEELDLQLSPGITIFSGPNGHGKTNIVEALGYLAHLSSHRVNSDAALVRRGEEIANISATAVNNGRELTAHLAIRARGSNRAHINRAAMNSQRDLLGVVRTTLFSPEDLALIRGEPEQRRHFLDAIMVARYPRLAAVKADYDKALRQRNALLRQSAFALRLVVGAPKGASHNLSEDIKADAESALATLDVWDSQLAALGAQIMSARVQIVHDLAPHLQQTYQSLAPQSRPAHMSYTSTIDVELADLGIRLGVSEPNQPTALLSPEIAEATLLQAFANKRPQEVERGTTLLGPHRDDVNLILGHQPAKGYASHGESWSFALSLRLAAFFMQRGDGVEPVVILDDVFAELDSSRRQHLVDLISSAEQVLITAAVDEDIPEALRDVAKIYTIDELKNSALSTAERAVKDGEADGD.

Gly30–Thr37 is a binding site for ATP.

Belongs to the RecF family.

Its subcellular location is the cytoplasm. Functionally, the RecF protein is involved in DNA metabolism; it is required for DNA replication and normal SOS inducibility. RecF binds preferentially to single-stranded, linear DNA. It also seems to bind ATP. The protein is DNA replication and repair protein RecF of Corynebacterium jeikeium (strain K411).